Reading from the N-terminus, the 201-residue chain is Large ribosomal subunit protein uL4 (201 aa).

The segment at glutamine 46–glycine 71 is disordered.

Belongs to the universal ribosomal protein uL4 family. As to quaternary structure, part of the 50S ribosomal subunit.

In terms of biological role, one of the primary rRNA binding proteins, this protein initially binds near the 5'-end of the 23S rRNA. It is important during the early stages of 50S assembly. It makes multiple contacts with different domains of the 23S rRNA in the assembled 50S subunit and ribosome. Forms part of the polypeptide exit tunnel. This is Large ribosomal subunit protein uL4 from Shewanella amazonensis (strain ATCC BAA-1098 / SB2B).